A 272-amino-acid chain; its full sequence is Ribosome maturation factor RimP (272 aa).

The segment at Gln209 to Asp272 is disordered. Residues Asn250–Ile266 are compositionally biased toward basic and acidic residues.

It belongs to the RimP family.

The protein localises to the cytoplasm. Its function is as follows. Required for maturation of 30S ribosomal subunits. This is Ribosome maturation factor RimP from Rhodopseudomonas palustris (strain BisA53).